A 172-amino-acid chain; its full sequence is Translationally-controlled tumor protein homolog (172 aa).

A TCTP domain is found at 1–172 (MIIYRDCISQ…FKDGLEIEKC (172 aa)). S46 bears the Phosphoserine; by PLK1 mark.

This sequence belongs to the TCTP family.

It is found in the cytoplasm. In terms of biological role, involved in calcium binding and microtubule stabilization. The sequence is that of Translationally-controlled tumor protein homolog (TPT1) from Gallus gallus (Chicken).